The sequence spans 657 residues: Methionine--tRNA ligase (657 aa).

The 'HIGH' region motif lies at 13–23; it reads YYPSGNLHIGH. The short motif at 308 to 312 is the 'KMSKS' region element; sequence KMSKS. Lysine 311 contributes to the ATP binding site. The region spanning 557-657 is the tRNA-binding domain; sequence DFDKVEIKAA…SAIPNGAVIK (101 aa).

The protein belongs to the class-I aminoacyl-tRNA synthetase family. MetG type 2B subfamily. Homodimer.

It is found in the cytoplasm. The enzyme catalyses tRNA(Met) + L-methionine + ATP = L-methionyl-tRNA(Met) + AMP + diphosphate. In terms of biological role, is required not only for elongation of protein synthesis but also for the initiation of all mRNA translation through initiator tRNA(fMet) aminoacylation. This is Methionine--tRNA ligase from Staphylococcus aureus (strain COL).